Reading from the N-terminus, the 191-residue chain is Dirigent protein 3 (191 aa).

An N-terminal signal peptide occupies residues 1–21; the sequence is MSKLILILTAQILLLTATALA. Residues asparagine 96 and asparagine 131 are each glycosylated (N-linked (GlcNAc...) asparagine).

Belongs to the plant dirigent protein family. As to quaternary structure, homodimer.

Its subcellular location is the secreted. It localises to the extracellular space. It is found in the apoplast. In terms of biological role, dirigent proteins impart stereoselectivity on the phenoxy radical-coupling reaction, yielding optically active lignans from two molecules of coniferyl alcohol in the biosynthesis of lignans, flavonolignans, and alkaloids and thus plays a central role in plant secondary metabolism. This chain is Dirigent protein 3 (DIR3), found in Arabidopsis thaliana (Mouse-ear cress).